Reading from the N-terminus, the 453-residue chain is Zinc finger protein Pegasus (453 aa).

3 C2H2-type zinc fingers span residues 101-123 (LKCR…IRIH), 129-151 (HRCH…MRSH), and 157-180 (YKCE…RRKH). The segment covering 279–293 (GQLSSLPPDTQNPAS) has biased composition (polar residues). The tract at residues 279 to 375 (GQLSSLPPDT…QPSTPAPALP (97 aa)) is disordered. Residues 315–332 (CSSAVSTSVAQSSSPASP) are compositionally biased toward low complexity. Residues 356–368 (RTSTPSISNSQPS) show a composition bias toward polar residues. 2 consecutive C2H2-type zinc fingers follow at residues 383–405 (HHCQ…MGCH) and 411–438 (FQCN…CCQH).

This sequence belongs to the Ikaros C2H2-type zinc-finger protein family. As to quaternary structure, probably self-associates.

The protein resides in the nucleus. Functionally, transcriptional repressor that binds the core 5'GNNTGTNG-3' DNA consensus sequence. This chain is Zinc finger protein Pegasus (ikzf5), found in Xenopus laevis (African clawed frog).